Here is a 249-residue protein sequence, read N- to C-terminus: Triosephosphate isomerase (249 aa).

Substrate-binding residues include Asn12 and Lys14. Lys14 is subject to N6-acetyllysine. The residue at position 68 (Tyr68) is a 3'-nitrotyrosine. At Ser80 the chain carries Phosphoserine. Catalysis depends on His96, which acts as the Electrophile. At Ser106 the chain carries Phosphoserine. Lys142 is covalently cross-linked (Glycyl lysine isopeptide (Lys-Gly) (interchain with G-Cter in SUMO1)). Lys149 is modified (N6-succinyllysine). Lys156 is modified (N6-acetyllysine; alternate). Lys156 carries the N6-succinyllysine; alternate modification. A Phosphoserine modification is found at Ser159. Residue Glu166 is the Proton acceptor of the active site. Thr173 carries the post-translational modification Phosphothreonine. Lys194 is subject to N6-acetyllysine; alternate. The residue at position 194 (Lys194) is an N6-succinyllysine; alternate. Position 194 is an N6-methyllysine; alternate (Lys194). Residue Ser198 is modified to Phosphoserine. Residue Tyr209 is modified to 3'-nitrotyrosine. Position 212 is a phosphoserine (Ser212). Thr214 is subject to Phosphothreonine. Residue Ser223 is modified to Phosphoserine. At Lys238 the chain carries N6-acetyllysine.

Belongs to the triosephosphate isomerase family. Homodimer.

Its subcellular location is the cytoplasm. It carries out the reaction dihydroxyacetone phosphate = methylglyoxal + phosphate. It catalyses the reaction D-glyceraldehyde 3-phosphate = dihydroxyacetone phosphate. The protein operates within carbohydrate degradation; glycolysis; D-glyceraldehyde 3-phosphate from glycerone phosphate: step 1/1. It participates in carbohydrate biosynthesis; gluconeogenesis. Its function is as follows. Triosephosphate isomerase is an extremely efficient metabolic enzyme that catalyzes the interconversion between dihydroxyacetone phosphate (DHAP) and D-glyceraldehyde-3-phosphate (G3P) in glycolysis and gluconeogenesis. It is also responsible for the non-negligible production of methylglyoxal a reactive cytotoxic side-product that modifies and can alter proteins, DNA and lipids. This is Triosephosphate isomerase (TPI1) from Pongo abelii (Sumatran orangutan).